The following is a 298-amino-acid chain: Movement protein BC1 (298 aa).

This sequence belongs to the begomovirus movement protein BC1 family. In terms of assembly, binds to dimeric supercoiled plasmid DNA. In terms of processing, phosphorylated.

Its subcellular location is the host cell membrane. It localises to the host microsome membrane. The protein localises to the host endoplasmic reticulum membrane. Transports viral genome to neighboring plant cells directly through plasmosdesmata, without any budding. The movement protein allows efficient cell to cell propagation, by bypassing the host cell wall barrier. Begomovirus genome is shuttled out of nucleus by Nuclear shuttle protein (NSP) and the movement protein transports the DNA-NSP complex to cell plasmodesmata and facilitates further movement across the cell wall. This chain is Movement protein BC1, found in Mungbean yellow mosaic virus (strain Vigna) (MYMV).